The primary structure comprises 497 residues: Probable cytosol aminopeptidase (497 aa).

Residues Lys267 and Asp272 each contribute to the Mn(2+) site. Lys279 is an active-site residue. Positions 290, 349, and 351 each coordinate Mn(2+). The active site involves Arg353.

The protein belongs to the peptidase M17 family. Mn(2+) serves as cofactor.

The protein resides in the cytoplasm. The catalysed reaction is Release of an N-terminal amino acid, Xaa-|-Yaa-, in which Xaa is preferably Leu, but may be other amino acids including Pro although not Arg or Lys, and Yaa may be Pro. Amino acid amides and methyl esters are also readily hydrolyzed, but rates on arylamides are exceedingly low.. It carries out the reaction Release of an N-terminal amino acid, preferentially leucine, but not glutamic or aspartic acids.. Presumably involved in the processing and regular turnover of intracellular proteins. Catalyzes the removal of unsubstituted N-terminal amino acids from various peptides. This chain is Probable cytosol aminopeptidase, found in Syntrophotalea carbinolica (strain DSM 2380 / NBRC 103641 / GraBd1) (Pelobacter carbinolicus).